Reading from the N-terminus, the 198-residue chain is Leucine-rich melanocyte differentiation-associated protein (198 aa).

LRR repeat units lie at residues 2–22 (EKYL…EGLS), 26–47 (SLEE…PGLP), 48–69 (RLHT…LDHL), and 75–95 (ALEY…VSLE). The LRRCT domain occupies 96–134 (KDEEDYKRYRCFVLYKLPNLKFLDAQKVTRQEREEALVR).

In the embryo, expressed in melanoblasts. In the fetus, expressed in melanocytes. Not detected in retinal pigment epithelial cells.

Its function is as follows. Required for melanocyte differentiation. The polypeptide is Leucine-rich melanocyte differentiation-associated protein (Homo sapiens (Human)).